Here is a 116-residue protein sequence, read N- to C-terminus: Protein Rev (116 aa).

Position 8 is a phosphoserine; by host CK2 (Ser8). The interval 18–26 is homomultimerization; the sequence is IIKILYQSN. Disordered regions lie at residues 25 to 49 and 82 to 116; these read SNPY…RARQ and SLNC…GDKE. The Nuclear localization signal and RNA-binding (RRE) signature appears at 34–50; it reads TRQARRNRRRRWRARQR. Residues 36–49 are compositionally biased toward basic residues; sequence QARRNRRRRWRARQ. A Nuclear export signal and binding to XPO1 motif is present at residues 73–84; sequence LQLPPLERLSLN. Residue Ser99 is modified to Phosphoserine; by host.

Belongs to the HIV-1 REV protein family. In terms of assembly, homomultimer; when bound to the RRE. Multimeric assembly is essential for activity and may involve XPO1. Binds to human KPNB1, XPO1, TNPO1, RANBP5 and IPO7. Interacts with the viral Integrase. Interacts with human KHDRBS1. Interacts with human NAP1; this interaction decreases Rev multimerization and stimulates its activity. Interacts with human DEAD-box helicases DDX3 and DDX24; these interactions may serve for viral RNA export to the cytoplasm and packaging, respectively. Interacts with human PSIP1; this interaction may inhibit HIV-1 DNA integration by promoting dissociation of the Integrase-LEDGF/p75 complex. Asymmetrically arginine dimethylated at one site by host PRMT6. Methylation impairs the RNA-binding activity and export of viral RNA from the nucleus to the cytoplasm. In terms of processing, phosphorylated by protein kinase CK2. Presence of, and maybe binding to the N-terminus of the regulatory beta subunit of CK2 is necessary for CK2-mediated Rev's phosphorylation.

The protein localises to the host nucleus. It is found in the host nucleolus. The protein resides in the host cytoplasm. In terms of biological role, escorts unspliced or incompletely spliced viral pre-mRNAs (late transcripts) out of the nucleus of infected cells. These pre-mRNAs carry a recognition sequence called Rev responsive element (RRE) located in the env gene, that is not present in fully spliced viral mRNAs (early transcripts). This function is essential since most viral proteins are translated from unspliced or partially spliced pre-mRNAs which cannot exit the nucleus by the pathway used by fully processed cellular mRNAs. Rev itself is translated from a fully spliced mRNA that readily exits the nucleus. Rev's nuclear localization signal (NLS) binds directly to KPNB1/Importin beta-1 without previous binding to KPNA1/Importin alpha-1. KPNB1 binds to the GDP bound form of RAN (Ran-GDP) and targets Rev to the nucleus. In the nucleus, the conversion from Ran-GDP to Ran-GTP dissociates Rev from KPNB1 and allows Rev's binding to the RRE in viral pre-mRNAs. Rev multimerization on the RRE via cooperative assembly exposes its nuclear export signal (NES) to the surface. Rev can then form a complex with XPO1/CRM1 and Ran-GTP, leading to nuclear export of the complex. Conversion from Ran-GTP to Ran-GDP mediates dissociation of the Rev/RRE/XPO1/RAN complex, so that Rev can return to the nucleus for a subsequent round of export. Beside KPNB1, also seems to interact with TNPO1/Transportin-1, RANBP5/IPO5 and IPO7/RANBP7 for nuclear import. The nucleoporin-like HRB/RIP is an essential cofactor that probably indirectly interacts with Rev to release HIV RNAs from the perinuclear region to the cytoplasm. The polypeptide is Protein Rev (Human immunodeficiency virus type 1 group M subtype K (isolate 97ZR-EQTB11) (HIV-1)).